We begin with the raw amino-acid sequence, 221 residues long: Putative hemin import ATP-binding protein HrtA (221 aa).

Residues 3-221 form the ABC transporter domain; that stretch reads LVVKDIVKNF…IELEDGKITD (219 aa). An ATP-binding site is contributed by 39 to 46; the sequence is GASGSGKT.

The protein belongs to the ABC transporter superfamily. HrtA family. As to quaternary structure, the complex is composed of two ATP-binding proteins (HrtA), two transmembrane proteins (HrtB) and a solute-binding protein.

It localises to the cell membrane. Part of the ABC transporter complex hrt involved in hemin import. Responsible for energy coupling to the transport system. In Staphylococcus aureus (strain Mu50 / ATCC 700699), this protein is Putative hemin import ATP-binding protein HrtA (hrtA).